A 490-amino-acid polypeptide reads, in one-letter code: MNAQQAQREHVLAVSRDFISQPRLTYKTVSGVNGPLVILDEVKFPKFAEIVQLRLADGTVRSGQVLEVSGSKAVVQVFEGTSGIDAKNTLCEFTGDILRTPVSEDMLGRVFNGSGKPIDKGPPILAEDFLDIQGQPINPWSRIYPEEMIQTGISAIDVMNSIARGQKIPIFSAAGLPHNEIAAQICRQAGLVKLPGKSVLDDHTDNFAIVFAAMGVNMETARFFKQDFEENGSMENVCLFLNLANDPTIERIITPRLALTAAEFLAYQCEKHVLVILTDMSSYAEALREVSAAREEVPGRRGFPGYMYTDLATIYERAGRVEGRNGSITQIPILTMPNDDITHPIPDLTGYITEGQIYVDRQLHNRQIYPPVNVLPSLSRLMKSAIGEGMTRKDHSDVSNQLYACYAIGKDVQAMKAVVGEEALTPDDLLYLEFLTKFEKNFISQGNYENRTVFESLDIGWQLLRIFPKEMLKRIPASILAEFYPRDSRH.

Arg-380 contacts ATP.

Belongs to the ATPase alpha/beta chains family. V-ATPase is a heteromultimeric enzyme made up of two complexes: the ATP-hydrolytic V1 complex and the proton translocation V0 complex. The V1 complex consists of three catalytic AB heterodimers that form a heterohexamer, three peripheral stalks each consisting of EG heterodimers, one central rotor including subunits D and F, and the regulatory subunits C and H. The proton translocation complex V0 consists of the proton transport subunit a, a ring of proteolipid subunits c9c'', rotary subunit d, subunits e and f, and the accessory subunits VhaAC45 and ATP6AP2. Expressed in Malpighian tubules, rectum, antennal palps and oviduct.

In terms of biological role, non-catalytic subunit of the V1 complex of vacuolar(H+)-ATPase (V-ATPase), a multisubunit enzyme composed of a peripheral complex (V1) that hydrolyzes ATP and a membrane integral complex (V0) that translocates protons. V-ATPase is responsible for acidifying and maintaining the pH of intracellular compartments and in some cell types, is targeted to the plasma membrane, where it is responsible for acidifying the extracellular environment. Essential for the proper assembly and activity of V-ATPase. The sequence is that of V-type proton ATPase subunit B (Vha55) from Drosophila melanogaster (Fruit fly).